The primary structure comprises 536 residues: MSENREIDATDRRDKTFDKEKLRPHVYSSVAGGMRSTSGDTKAVLLFSLLFALLSYIDAFLYVLGDMVMMNTQMPSSILFIKSVLVLPMTFFFIVIVQKGLRYLSQPRMLEVILIISSVFFLLFGFVIWPYCKRLQPDFFWSRDIFSDGKMKTRHLDFFFPIFLVFSEWASTMLYLVAELWGSLIISFMFFSRAIHQCTEAQVKKFLPTISLISAVVFLSSGLLTKSLNSRRDALPYHEKERLFSQVFIVTSALTVMSAITSFFTDRALAKDDPRHKGKKEHKVRKIGFAGSLKMMQKSRFLRAMTESVVAASVCSNIFEAIYRGGIVLGAVQSSTSKSSYMNRLNAMAQIITSIFLLVMFFKPATHLIERRGWFPVAITAPIVAIITLVLFFPMVFFNNITEGDLIASGEEYVGSFVLENYTGMFLTTIIRISKYCFFDVAKEAASIRVSPVHRHSFRGIHDGLGINIGKTIGSVYCTLVTVVFDVRDVRNVVSVSTVFVGVFCVIWIRSILHINKKYKESIERNDFINVELAEG.

Transmembrane regions (helical) follow at residues 44 to 64 (VLLFSLLFALLSYIDAFLYVL), 77 to 97 (SILFIKSVLVLPMTFFFIVIV), 109 to 129 (MLEVILIISSVFFLLFGFVIW), 172 to 194 (TMLYLVAELWGSLIISFMFFSRA), 205 to 225 (KFLPTISLISAVVFLSSGLLT), 244 to 264 (FSQVFIVTSALTVMSAITSFF), 309 to 329 (VVAASVCSNIFEAIYRGGIVL), 349 to 369 (AQIITSIFLLVMFFKPATHLI), and 378 to 398 (AITAPIVAIITLVLFFPMVFF). N-linked (GlcNAc...) asparagine glycans are attached at residues Asn-400 and Asn-421. 2 helical membrane passes run 465-485 (LGINIGKTIGSVYCTLVTVVF) and 493-513 (VVSVSTVFVGVFCVIWIRSIL).

The protein belongs to the ADP/ATP translocase tlc family.

The protein localises to the cell membrane. In terms of biological role, ATP transporter involved in the uptake of ATP from the host cell cytoplasm. Provides the microsporidian cell with host ATP in exchange for ADP. This is an obligate exchange system. This energy acquiring activity is an important component of microsporidian parasitism. The protein is ADP,ATP carrier protein 4 (NTT4) of Encephalitozoon cuniculi (strain GB-M1) (Microsporidian parasite).